The sequence spans 314 residues: Olfactory receptor 1E1 (314 aa).

Residues 1–25 (MMGQNQTSISDFLLLGLPIQPEQQN) lie on the Extracellular side of the membrane. A glycan (N-linked (GlcNAc...) asparagine) is linked at N5. Residues 26–49 (LCYALFLAMYLTTLLGNLLIIVLI) traverse the membrane as a helical segment. The Cytoplasmic portion of the chain corresponds to 50–57 (RLDSHLHT). A helical membrane pass occupies residues 58-79 (PMYLFLSNLSFSDLCFSSVTIP). The Extracellular portion of the chain corresponds to 80-100 (KLLQNMQNQDPSIPYADCLTQ). The helical transmembrane segment at 101–120 (MYFFLLFGDLESFLLVAMAY) threads the bilayer. The Cytoplasmic segment spans residues 121–139 (DRYVAICFPLHYTAIMSPM). The chain crosses the membrane as a helical span at residues 140–158 (LCLALVALSWVLTTFHAML). The Extracellular portion of the chain corresponds to 159-195 (HTLLMARLCFCADNVIPHFFCDMSALLKLAFSDTRVN). A helical transmembrane segment spans residues 196–219 (EWVIFIMGGLILVIPFLLILGSYA). The Cytoplasmic segment spans residues 220–236 (RIVSSILKVPSSKGICK). Residues 237 to 259 (AFSTCGSHLSVVSLFYGTVIGLY) traverse the membrane as a helical segment. Topologically, residues 260 to 272 (LCSSANSSTLKDT) are extracellular. A helical membrane pass occupies residues 273 to 292 (VMAMMYTVVTPMLNPFIYSL). Topologically, residues 293–314 (RNRDMKGALSRVIHQKKTFFSL) are cytoplasmic.

It belongs to the G-protein coupled receptor 1 family.

It is found in the cell membrane. Odorant receptor. This is Olfactory receptor 1E1 (OR1E1) from Homo sapiens (Human).